The sequence spans 408 residues: 8-amino-7-oxononanoate synthase (408 aa).

Arginine 20 contacts substrate. 117–118 (GY) is a pyridoxal 5'-phosphate binding site. Histidine 142 lines the substrate pocket. Pyridoxal 5'-phosphate-binding residues include serine 188, histidine 216, and threonine 244. Position 247 is an N6-(pyridoxal phosphate)lysine (lysine 247). Substrate is bound at residue threonine 367.

This sequence belongs to the class-II pyridoxal-phosphate-dependent aminotransferase family. BioF subfamily. In terms of assembly, homodimer. It depends on pyridoxal 5'-phosphate as a cofactor.

The enzyme catalyses 6-carboxyhexanoyl-[ACP] + L-alanine + H(+) = (8S)-8-amino-7-oxononanoate + holo-[ACP] + CO2. It functions in the pathway cofactor biosynthesis; biotin biosynthesis. Functionally, catalyzes the decarboxylative condensation of pimeloyl-[acyl-carrier protein] and L-alanine to produce 8-amino-7-oxononanoate (AON), [acyl-carrier protein], and carbon dioxide. This chain is 8-amino-7-oxononanoate synthase, found in Cupriavidus pinatubonensis (strain JMP 134 / LMG 1197) (Cupriavidus necator (strain JMP 134)).